The sequence spans 135 residues: Large ribosomal subunit protein uL22c (135 aa).

Belongs to the universal ribosomal protein uL22 family. Part of the 50S ribosomal subunit.

The protein localises to the plastid. Its function is as follows. This protein binds specifically to 23S rRNA. The globular domain of the protein is located near the polypeptide exit tunnel on the outside of the subunit, while an extended beta-hairpin is found that lines the wall of the exit tunnel in the center of the 70S ribosome. This Cuscuta reflexa (Southern Asian dodder) protein is Large ribosomal subunit protein uL22c (rpl22).